We begin with the raw amino-acid sequence, 387 residues long: NAD(P)H oxidoreductase RTN4IP1, mitochondrial (387 aa).

A mitochondrion-targeting transit peptide spans 1–27 (MLMCRRWLVCSLRCHYRSFSFSAARRT). An Enoyl reductase (ER) domain is found at 38-379 (GKNDVLRFTK…QGHARGKTVV (342 aa)). Residues serine 200, glycine 202, valine 203, serine 223, tyrosine 241, leucine 286, glycine 327, phenylalanine 329, histidine 372, alanine 373, and arginine 374 each contribute to the NADPH site.

This sequence belongs to the zinc-containing alcohol dehydrogenase family. Quinone oxidoreductase subfamily.

The protein resides in the mitochondrion matrix. It is found in the mitochondrion outer membrane. The enzyme catalyses a 3-demethylubiquinone + NADH + 2 H(+) = a 3-demethylubiquinol + NAD(+). It catalyses the reaction a 3-demethylubiquinone + NADPH + 2 H(+) = a 3-demethylubiquinol + NADP(+). It carries out the reaction 3-demethylubiquinone-10 + NADH + 2 H(+) = 3-demethylubiquinol-10 + NAD(+). The catalysed reaction is 3-demethylubiquinone-10 + NADPH + 2 H(+) = 3-demethylubiquinol-10 + NADP(+). The protein operates within cofactor biosynthesis; ubiquinone biosynthesis. In terms of biological role, NAD(P)H oxidoreductase involved in the ubiquinone biosynthetic pathway. Required for the O-methyltransferase activity of COQ3. Able to catalyze the oxidoreduction of 3-demethylubiquinone into 3-demethylubiquinol in vitro. However, it is unclear if 3-demethylubiquinone constitutes a substrate in vivo. May also play a role in the regulation of retinal ganglion cell (RGC) neurite outgrowth, and hence in the development of the inner retina and optic nerve. The chain is NAD(P)H oxidoreductase RTN4IP1, mitochondrial (rtn4ip1) from Danio rerio (Zebrafish).